The chain runs to 104 residues: Type VII secretion system extracellular protein B (104 aa).

The protein belongs to the WXG100 family. Homodimer. When mixed with EsxA does not form heterodimers.

The protein resides in the secreted. Functionally, virulence factor that is important for the establishment of infection in the host. EsxB is required for EsxA synthesis as well as secretion. Mediates together with EsxA the release of S.aureus from the host cell. Also inhibits host cytokine production and thus modulates dendritic cell-mediated immunity. The protein is Type VII secretion system extracellular protein B of Staphylococcus aureus (strain Mu50 / ATCC 700699).